Here is a 461-residue protein sequence, read N- to C-terminus: ATP synthase subunit beta 2 (461 aa).

151–158 (GGAGVGKT) provides a ligand contact to ATP.

This sequence belongs to the ATPase alpha/beta chains family. F-type ATPases have 2 components, CF(1) - the catalytic core - and CF(0) - the membrane proton channel. CF(1) has five subunits: alpha(3), beta(3), gamma(1), delta(1), epsilon(1). CF(0) has three main subunits: a(1), b(2) and c(9-12). The alpha and beta chains form an alternating ring which encloses part of the gamma chain. CF(1) is attached to CF(0) by a central stalk formed by the gamma and epsilon chains, while a peripheral stalk is formed by the delta and b chains.

The protein localises to the cell inner membrane. The enzyme catalyses ATP + H2O + 4 H(+)(in) = ADP + phosphate + 5 H(+)(out). Its function is as follows. Produces ATP from ADP in the presence of a proton gradient across the membrane. The catalytic sites are hosted primarily by the beta subunits. The chain is ATP synthase subunit beta 2 from Photobacterium profundum (strain SS9).